The primary structure comprises 667 residues: Cylicin-1 (667 aa).

Disordered stretches follow at residues 121-251 (PYTH…SSNV) and 275-634 (SQNN…ILPS). The segment covering 129–172 (KKAESKKYKDDKKETALKKISKKDTGPHEVDEKPKRRNKADKTP) has biased composition (basic and acidic residues). Over residues 173 to 182 (SKSSHGSQLS) the composition is skewed to low complexity. Basic and acidic residues predominate over residues 187–197 (SKSETNPESKD). The span at 223–237 (STSTKKYSKSSKNNS) shows a compositional bias: low complexity. Polar residues predominate over residues 238–251 (DAVSETCSKNSSNV). Basic and acidic residues-rich tracts occupy residues 284 to 326 (KKDA…KDTE), 345 to 371 (SKKD…DAKK), 380 to 394 (SKKD…KDAE), 417 to 431 (SKKD…KDAE), 438 to 464 (GDSK…KDAV), 483 to 506 (SKKD…KEST), 521 to 533 (SKKD…KKAT), 549 to 558 (KKTEMFKSSD), and 583 to 593 (DSKKDAVEPKR). A run of 9 repeats spans residues 287–305 (AKKD…DSKD), 306–337 (AKKD…DSKD), 338–368 (AKKG…DSKD), 369–405 (AKKD…DSKD), 406–442 (AKKD…DSKN), 443–475 (AKKD…SEGD), 476–516 (AKKS…ESKK), 517–547 (VKRD…SKRY), and 548–569 (LKKT…FKPG). Residues 287-569 (AKKDAKGKGS…ESEESLFKPG (283 aa)) are 9 X approximate tandem repeats. Residues 624–633 (PLPPCEPILP) are compositionally biased toward pro residues.

In terms of assembly, interacts with proteins of spermatozoa head including ACTL7A, CCIN, FAM209A and SPACA1; the interactions may be necessary for proper acrosome attachment to the nuclear envelope. As to expression, testis.

It is found in the cytoplasm. The protein localises to the cytoskeleton. It localises to the perinuclear theca. The protein resides in the calyx. In terms of biological role, plays a role in the establishment of normal sperm morphology during spermatogenesis and is required for acrosome attachment to the nuclear envelope. In Bos taurus (Bovine), this protein is Cylicin-1 (CYLC1).